A 363-amino-acid chain; its full sequence is Phosphoserine aminotransferase (363 aa).

Position 42 (arginine 42) interacts with L-glutamate. Residues alanine 76–serine 77, tryptophan 101, threonine 151, aspartate 170, and glutamine 193 each bind pyridoxal 5'-phosphate. Lysine 194 bears the N6-(pyridoxal phosphate)lysine mark. Asparagine 234 to threonine 235 lines the pyridoxal 5'-phosphate pocket.

The protein belongs to the class-V pyridoxal-phosphate-dependent aminotransferase family. SerC subfamily. As to quaternary structure, homodimer. It depends on pyridoxal 5'-phosphate as a cofactor.

It is found in the cytoplasm. It catalyses the reaction O-phospho-L-serine + 2-oxoglutarate = 3-phosphooxypyruvate + L-glutamate. The enzyme catalyses 4-(phosphooxy)-L-threonine + 2-oxoglutarate = (R)-3-hydroxy-2-oxo-4-phosphooxybutanoate + L-glutamate. Its pathway is amino-acid biosynthesis; L-serine biosynthesis; L-serine from 3-phospho-D-glycerate: step 2/3. In terms of biological role, catalyzes the reversible conversion of 3-phosphohydroxypyruvate to phosphoserine and of 3-hydroxy-2-oxo-4-phosphonooxybutanoate to phosphohydroxythreonine. The sequence is that of Phosphoserine aminotransferase from Listeria monocytogenes serotype 4b (strain F2365).